The sequence spans 24 residues: Brevinin-1Pa (24 aa).

C18 and C24 are disulfide-bonded.

Expressed by the skin glands.

Its subcellular location is the secreted. Functionally, antibacterial activity against Gram-positive bacterium S.aureus and Gram-negative bacterium E.coli. Has activity against C.albicans. The protein is Brevinin-1Pa of Lithobates pipiens (Northern leopard frog).